Consider the following 185-residue polypeptide: DNA-directed RNA polymerase 21 kDa subunit (185 aa).

The protein belongs to the poxviridae DNA-directed RNA polymerase 22 kDa subunit family. The DNA-dependent RNA polymerase used for intermediate and late genes expression consists of eight subunits Rpo30/OPG66, Rpo7/OPG90, Rpo22/OPG103, Rpo147/OPG105, Rpo18/OPG119, Rpo19/OPG131, Rpo132/OPG151 and Rpo35/OPG156. The same holoenzyme, with the addition of the transcription-specificity factor OPG109, is used for early gene expression.

The protein resides in the virion. It carries out the reaction RNA(n) + a ribonucleoside 5'-triphosphate = RNA(n+1) + diphosphate. Functionally, part of the DNA-dependent RNA polymerase which catalyzes the transcription of viral DNA into RNA using the four ribonucleoside triphosphates as substrates. Responsible for the transcription of early, intermediate and late genes. DNA-dependent RNA polymerase associates with the early transcription factor (ETF), itself composed of OPG118 and OPG133, thereby allowing the early genes transcription. Late transcription, and probably also intermediate transcription, require newly synthesized RNA polymerase. This is DNA-directed RNA polymerase 21 kDa subunit (OPG103) from Oryctolagus cuniculus (Rabbit).